The primary structure comprises 368 residues: DNA replication and repair protein RecF (368 aa).

An ATP-binding site is contributed by 30–37; it reads GRNGSGKT.

It belongs to the RecF family.

The protein resides in the cytoplasm. Its function is as follows. The RecF protein is involved in DNA metabolism; it is required for DNA replication and normal SOS inducibility. RecF binds preferentially to single-stranded, linear DNA. It also seems to bind ATP. This chain is DNA replication and repair protein RecF, found in Chlorobaculum tepidum (strain ATCC 49652 / DSM 12025 / NBRC 103806 / TLS) (Chlorobium tepidum).